A 292-amino-acid chain; its full sequence is GTP cyclohydrolase FolE2 (292 aa).

Belongs to the GTP cyclohydrolase IV family.

It catalyses the reaction GTP + H2O = 7,8-dihydroneopterin 3'-triphosphate + formate + H(+). It participates in cofactor biosynthesis; 7,8-dihydroneopterin triphosphate biosynthesis; 7,8-dihydroneopterin triphosphate from GTP: step 1/1. Its function is as follows. Converts GTP to 7,8-dihydroneopterin triphosphate. The chain is GTP cyclohydrolase FolE2 from Macrococcus caseolyticus (strain JCSC5402) (Macrococcoides caseolyticum).